The following is a 183-amino-acid chain: UPF0200 protein MmarC6_1392 (183 aa).

8–15 (GMPGSGKS) is a binding site for ATP.

This sequence belongs to the UPF0200 family.

The chain is UPF0200 protein MmarC6_1392 from Methanococcus maripaludis (strain C6 / ATCC BAA-1332).